The following is a 440-amino-acid chain: 2-phosphinomethylmalate synthase (440 aa).

The Pyruvate carboxyltransferase domain maps to 39 to 313 (VWLSETTHRD…GARVNLPAVN (275 aa)).

This sequence belongs to the alpha-IPM synthase/homocitrate synthase family. In terms of assembly, homodimer. It depends on Mn(2+) as a cofactor. Co(2+) is required as a cofactor.

It catalyses the reaction 3-(hydrohydroxyphosphoryl)pyruvate + acetyl-CoA + H2O = phosphinomethylmalate + CoA + H(+). It functions in the pathway secondary metabolite biosynthesis; bialaphos biosynthesis. Its activity is regulated as follows. Strongly inhibited by p-chloromercuribenzoate (pCMB), iodoacetamide (IA) and EDTA. Functionally, involved in the biosynthesis of phosphinothricin tripeptide (PTT), also known as bialaphos (BA), a natural-product antibiotic and potent herbicide. Catalyzes the condensation berween phosphinopyruvic acid (PPA), an analog of oxalacetic acid, and acetyl-CoA to form R-2-phosphinomethylmalic acid (PMM). Can also act on oxaloacetate, but shows no activity when acetyl-CoA is substituted by propionyl-CoA or butyryl-CoA. The protein is 2-phosphinomethylmalate synthase of Streptomyces hygroscopicus.